A 364-amino-acid chain; its full sequence is Chorismate synthase (364 aa).

Residue R48 coordinates NADP(+). Residues 131–133 (RSS), 243–244 (NA), G288, 303–307 (KPTSS), and R329 contribute to the FMN site.

The protein belongs to the chorismate synthase family. Homotetramer. It depends on FMNH2 as a cofactor.

It carries out the reaction 5-O-(1-carboxyvinyl)-3-phosphoshikimate = chorismate + phosphate. It functions in the pathway metabolic intermediate biosynthesis; chorismate biosynthesis; chorismate from D-erythrose 4-phosphate and phosphoenolpyruvate: step 7/7. Its function is as follows. Catalyzes the anti-1,4-elimination of the C-3 phosphate and the C-6 proR hydrogen from 5-enolpyruvylshikimate-3-phosphate (EPSP) to yield chorismate, which is the branch point compound that serves as the starting substrate for the three terminal pathways of aromatic amino acid biosynthesis. This reaction introduces a second double bond into the aromatic ring system. In Brucella anthropi (strain ATCC 49188 / DSM 6882 / CCUG 24695 / JCM 21032 / LMG 3331 / NBRC 15819 / NCTC 12168 / Alc 37) (Ochrobactrum anthropi), this protein is Chorismate synthase.